A 963-amino-acid chain; its full sequence is Collagen alpha-1(I) chain (963 aa).

The interval 1-963 (GPMGPSGPRG…PGPPGPPGPP (963 aa)) is disordered. Over residues 40-54 (NGDDGEAGKPGRPGE) the composition is skewed to basic and acidic residues. Phosphoserine is present on Ser-82. Composition is skewed to low complexity over residues 90–106 (DAGP…PGEN) and 129–142 (PAGA…TGAA). Residues 144-156 (PPGPTGPAGPPGF) are compositionally biased toward pro residues. Low complexity predominate over residues 190–229 (AGAAGPAGNPGADGQPGAKGANGAPGIAGAPGFPGARGPS). Residues 296–305 (GERGGPGARG) show a composition bias toward gly residues. Low complexity-rich tracts occupy residues 313-337 (AGPK…PGEA), 349-375 (KGIT…QDGR), 384-403 (ARGQ…AGEP), 482-495 (PRGA…DGAK), 555-569 (SGPS…ARGA), and 582-609 (AGFA…KGDA). Ser-558 is subject to Phosphoserine. Positions 611–623 (PPGPAGPTGPPGP) are enriched in pro residues. Low complexity-rich tracts occupy residues 638 to 654 (SAGP…AGRV), 683 to 692 (ETGPAGRPGE), and 702 to 726 (AGEK…QGIA). Composition is skewed to pro residues over residues 767–777 (PPGPVGPPGIA) and 813–828 (AGPP…PGPV). Low complexity predominate over residues 849–863 (IGPVGARGPAGPQGP). A compositionally biased stretch (basic and acidic residues) spans 864-878 (RGDKGETGEQGDRGI). The segment covering 897-930 (PGEQGPSGASGPAGPRGPPGSAGAPGKDGINGIP) has biased composition (low complexity). Pro residues predominate over residues 948–963 (VGPPGPPGPPGPPGPP).

It belongs to the fibrillar collagen family. In terms of assembly, trimers of one alpha 2(I) and two alpha 1(I) chains. Post-translationally, prolines at the third position of the tripeptide repeating unit (G-X-Y) are hydroxylated in some or all of the chains. In terms of tissue distribution, forms the fibrils of tendon, ligaments and bones. In bones, the fibrils are mineralized with calcium hydroxyapatite.

The protein localises to the secreted. Its subcellular location is the extracellular space. It localises to the extracellular matrix. Type I collagen is a member of group I collagen (fibrillar forming collagen). In Tapirus terrestris (Lowland tapir), this protein is Collagen alpha-1(I) chain.